Here is a 564-residue protein sequence, read N- to C-terminus: Pyruvate decarboxylase (564 aa).

Asp28 and His115 together coordinate pyruvate. Thiamine diphosphate contacts are provided by residues Thr390 and 413 to 415 (GSI). Residue Asp444 participates in Mg(2+) binding. Thiamine diphosphate is bound by residues 445–446 (GS) and 471–476 (NNGYTI). The Mg(2+) site is built by Asn471 and Gly473. A pyruvate-binding site is contributed by Glu477.

This sequence belongs to the TPP enzyme family. Homotetramer. It depends on Mg(2+) as a cofactor. Thiamine diphosphate serves as cofactor.

It carries out the reaction a 2-oxocarboxylate + H(+) = an aldehyde + CO2. It catalyses the reaction pyruvate + H(+) = acetaldehyde + CO2. The polypeptide is Pyruvate decarboxylase (PDC) (Hanseniaspora uvarum (Yeast)).